A 198-amino-acid polypeptide reads, in one-letter code: Probable molybdenum cofactor guanylyltransferase (198 aa).

GTP contacts are provided by residues 9–11, Lys22, Asp66, and Asp95; that span reads LAG. Asp95 contributes to the Mg(2+) binding site.

This sequence belongs to the MobA family. Mg(2+) is required as a cofactor.

Its subcellular location is the cytoplasm. The catalysed reaction is Mo-molybdopterin + GTP + H(+) = Mo-molybdopterin guanine dinucleotide + diphosphate. Its function is as follows. Transfers a GMP moiety from GTP to Mo-molybdopterin (Mo-MPT) cofactor (Moco or molybdenum cofactor) to form Mo-molybdopterin guanine dinucleotide (Mo-MGD) cofactor. The chain is Probable molybdenum cofactor guanylyltransferase from Clostridium perfringens (strain ATCC 13124 / DSM 756 / JCM 1290 / NCIMB 6125 / NCTC 8237 / Type A).